Reading from the N-terminus, the 305-residue chain is Glycine--tRNA ligase alpha subunit (305 aa).

The protein belongs to the class-II aminoacyl-tRNA synthetase family. In terms of assembly, tetramer of two alpha and two beta subunits.

It is found in the cytoplasm. It catalyses the reaction tRNA(Gly) + glycine + ATP = glycyl-tRNA(Gly) + AMP + diphosphate. This Streptococcus pneumoniae serotype 19F (strain G54) protein is Glycine--tRNA ligase alpha subunit.